Here is an 88-residue protein sequence, read N- to C-terminus: Putative membrane protein insertion efficiency factor (88 aa).

Residues 67–88 are disordered; sequence LNAGGYDPVPPKSDNHSKENKK. The segment covering 79–88 has biased composition (basic and acidic residues); the sequence is SDNHSKENKK.

The protein belongs to the UPF0161 family.

It is found in the cell inner membrane. Functionally, could be involved in insertion of integral membrane proteins into the membrane. In Actinobacillus succinogenes (strain ATCC 55618 / DSM 22257 / CCUG 43843 / 130Z), this protein is Putative membrane protein insertion efficiency factor.